A 370-amino-acid chain; its full sequence is UPF0284 protein PCC7424_2681 (370 aa).

Belongs to the UPF0284 family.

The chain is UPF0284 protein PCC7424_2681 from Gloeothece citriformis (strain PCC 7424) (Cyanothece sp. (strain PCC 7424)).